The chain runs to 436 residues: uncharacterized protein (436 aa).

A helical membrane pass occupies residues 1-21 (MILLQVICTIWTCLFIPLLNA). 2 BNR repeats span residues 57–68 (WISSDSGENWEA) and 101–112 (YVTDDRGKSWRA). N-linked (GlcNAc...) asparagine glycosylation occurs at N157. 2 BNR repeats span residues 229-240 (ALSTDGGKTFKK) and 394-405 (KISVDNGLTWSN).

It is found in the membrane. This is an uncharacterized protein from Saccharomyces cerevisiae (strain ATCC 204508 / S288c) (Baker's yeast).